Here is a 374-residue protein sequence, read N- to C-terminus: Flap endonuclease 1 (374 aa).

The N-domain stretch occupies residues methionine 1–arginine 105. Position 34 (aspartate 34) interacts with Mg(2+). DNA-binding residues include arginine 47 and arginine 71. Aspartate 87 contacts Mg(2+). The tract at residues glycine 103–glutamate 122 is disordered. Residues lysine 123 to histidine 254 form an I-domain region. Mg(2+) contacts are provided by glutamate 159, glutamate 161, aspartate 180, and aspartate 182. Glutamate 159 lines the DNA pocket. Residues glycine 232 and aspartate 234 each contribute to the DNA site. Position 234 (aspartate 234) interacts with Mg(2+). The tract at residues serine 335–lysine 374 is disordered. The interaction with PCNA stretch occupies residues glutamine 340 to phenylalanine 348.

The protein belongs to the XPG/RAD2 endonuclease family. FEN1 subfamily. In terms of assembly, interacts with PCNA. Three molecules of FEN1 bind to one PCNA trimer with each molecule binding to one PCNA monomer. PCNA stimulates the nuclease activity without altering cleavage specificity. It depends on Mg(2+) as a cofactor. Post-translationally, phosphorylated. Phosphorylation upon DNA damage induces relocalization to the nuclear plasma.

Its subcellular location is the nucleus. The protein resides in the nucleolus. It is found in the nucleoplasm. The protein localises to the mitochondrion. Functionally, structure-specific nuclease with 5'-flap endonuclease and 5'-3' exonuclease activities involved in DNA replication and repair. During DNA replication, cleaves the 5'-overhanging flap structure that is generated by displacement synthesis when DNA polymerase encounters the 5'-end of a downstream Okazaki fragment. It enters the flap from the 5'-end and then tracks to cleave the flap base, leaving a nick for ligation. Also involved in the long patch base excision repair (LP-BER) pathway, by cleaving within the apurinic/apyrimidinic (AP) site-terminated flap. Acts as a genome stabilization factor that prevents flaps from equilibrating into structures that lead to duplications and deletions. Also possesses 5'-3' exonuclease activity on nicked or gapped double-stranded DNA, and exhibits RNase H activity. Also involved in replication and repair of rDNA and in repairing mitochondrial DNA. In Mycosarcoma maydis (Corn smut fungus), this protein is Flap endonuclease 1.